We begin with the raw amino-acid sequence, 192 residues long: Ribose 1,5-bisphosphate phosphokinase PhnN (192 aa).

ATP is bound at residue 15–22 (GPSGAGKD).

The protein belongs to the ribose 1,5-bisphosphokinase family.

It catalyses the reaction alpha-D-ribose 1,5-bisphosphate + ATP = 5-phospho-alpha-D-ribose 1-diphosphate + ADP. Its pathway is metabolic intermediate biosynthesis; 5-phospho-alpha-D-ribose 1-diphosphate biosynthesis; 5-phospho-alpha-D-ribose 1-diphosphate from D-ribose 5-phosphate (route II): step 3/3. In terms of biological role, catalyzes the phosphorylation of ribose 1,5-bisphosphate to 5-phospho-D-ribosyl alpha-1-diphosphate (PRPP). The chain is Ribose 1,5-bisphosphate phosphokinase PhnN from Brucella melitensis biotype 2 (strain ATCC 23457).